A 627-amino-acid chain; its full sequence is Phosphomethylpyrimidine synthase (627 aa).

Polar residues predominate over residues 1–21 (MSAQQQKNLSESAQVDQQSVQ). Residues 1 to 32 (MSAQQQKNLSESAQVDQQSVQPFPRSQKVYVQ) are disordered. Residues Asn231, Met260, Tyr289, His325, 345–347 (SRG), 386–389 (DGLR), and Glu425 each bind substrate. Position 429 (His429) interacts with Zn(2+). Tyr452 contributes to the substrate binding site. His493 is a binding site for Zn(2+). [4Fe-4S] cluster is bound by residues Cys573, Cys576, and Cys581.

The protein belongs to the ThiC family. Homodimer. The cofactor is [4Fe-4S] cluster.

It carries out the reaction 5-amino-1-(5-phospho-beta-D-ribosyl)imidazole + S-adenosyl-L-methionine = 4-amino-2-methyl-5-(phosphooxymethyl)pyrimidine + CO + 5'-deoxyadenosine + formate + L-methionine + 3 H(+). It participates in cofactor biosynthesis; thiamine diphosphate biosynthesis. In terms of biological role, catalyzes the synthesis of the hydroxymethylpyrimidine phosphate (HMP-P) moiety of thiamine from aminoimidazole ribotide (AIR) in a radical S-adenosyl-L-methionine (SAM)-dependent reaction. This is Phosphomethylpyrimidine synthase from Ectopseudomonas mendocina (strain ymp) (Pseudomonas mendocina).